The primary structure comprises 139 residues: uncharacterized protein (139 aa).

Positions M1–K133 constitute a Globin domain.

The protein belongs to the globin family.

This is an uncharacterized protein from Aquifex aeolicus (strain VF5).